We begin with the raw amino-acid sequence, 177 residues long: Putative pre-16S rRNA nuclease (177 aa).

Belongs to the YqgF nuclease family.

It localises to the cytoplasm. Could be a nuclease involved in processing of the 5'-end of pre-16S rRNA. The chain is Putative pre-16S rRNA nuclease from Psychrobacter sp. (strain PRwf-1).